Here is a 429-residue protein sequence, read N- to C-terminus: Serum response factor-binding protein 1 (429 aa).

At alanine 2 the chain carries N-acetylalanine. Coiled coils occupy residues 42–67 (KGTEDALLKNQRRAQRLLEEIHAMKE) and 108–146 (LLKKKIDVLKAAVQAFKEARQNVAEVESSKNASEDNHSE). 2 disordered regions span residues 131–157 (AEVESSKNASEDNHSENTLYSNDNGSN) and 176–429 (LAKK…TFDD). Positions 146–157 (ENTLYSNDNGSN) are enriched in polar residues. Basic and acidic residues predominate over residues 183 to 195 (NSKEKIAKMEHGP). A Glycyl lysine isopeptide (Lys-Gly) (interchain with G-Cter in SUMO2) cross-link involves residue lysine 190. A phosphoserine mark is found at serine 203, serine 205, serine 264, serine 279, and serine 281. Over residues 249 to 265 (GGEEFCEEEKEYFDDST) the composition is skewed to acidic residues. Positions 296 to 341 (KESSCHSSVKEQKPLEKVFLKEDTGETHGDTRNDKIKPSTETRKLE) are enriched in basic and acidic residues. Lysine 316 participates in a covalent cross-link: Glycyl lysine isopeptide (Lys-Gly) (interchain with G-Cter in SUMO2). 3 positions are modified to phosphoserine: serine 349, serine 351, and serine 367. The segment covering 357–367 (NFKEQAPKTRS) has biased composition (basic and acidic residues). Residues 373–383 (NEPQIKNQFNK) are compositionally biased toward polar residues.

In terms of assembly, interacts with SRF. Forms complexes with SRF and SRF cofactors ARID2, MYOCD and NKX2-5. Interacts with the N-terminus of SLC2A4. Abundantly expressed in heart and skeletal muscle, and at much lower levels in brain and lung.

The protein localises to the cytoplasm. It is found in the perinuclear region. Its function is as follows. May be involved in regulating transcriptional activation of cardiac genes during the aging process. May play a role in biosynthesis and/or processing of SLC2A4 in adipose cells. In Homo sapiens (Human), this protein is Serum response factor-binding protein 1.